We begin with the raw amino-acid sequence, 56 residues long: RQSLGVPPQVKGPFQVVRPPLRTSVNSYTLPILQYIRALPLEVITNAFQISLEEAR.

The residue at position 45 (T45) is a Phosphothreonine.

It belongs to the 11S seed storage protein (globulins) family. Hexamer; each subunit is composed of an acidic and a basic chain derived from a single precursor and linked by a disulfide bond.

Its function is as follows. This is a seed storage protein. The sequence is that of Cruciferin from Sinapis alba (White mustard).